Here is a 24-residue protein sequence, read N- to C-terminus: GLNALKKVFQGIHEAIKLINNHVQ.

In terms of tissue distribution, expressed by the skin glands.

It localises to the secreted. Functionally, antimicrobial peptide with activity against fungus (C.albicans) and Gram-positive and Gram-negative bacteria (S.aureus and E.coli). Also has low hemolytic activity against human erythrocytes. In Pseudis paradoxa (Paradoxical frog), this protein is Pseudin-2.